Reading from the N-terminus, the 133-residue chain is Small ribosomal subunit protein eS24z (133 aa).

Residues 104-133 form a disordered region; that stretch reads KSRKQIKERKNRAKKIRGVKKTKAGDAKKK. Basic residues predominate over residues 109–125; it reads IKERKNRAKKIRGVKKT.

It belongs to the eukaryotic ribosomal protein eS24 family.

This chain is Small ribosomal subunit protein eS24z (RPS24A), found in Arabidopsis thaliana (Mouse-ear cress).